Here is a 200-residue protein sequence, read N- to C-terminus: uncharacterized protein (200 aa).

A signal peptide spans 1-24 (MSRVFSCVLRACVCAGLCCWVCMG). Residues 124–200 (GGRDLPMHGA…GEGGDNGEGE (77 aa)) are disordered. Residues 184–200 (LGDEGETGEGGDNGEGE) show a composition bias toward acidic residues.

This is an uncharacterized protein from Homo sapiens (Human).